A 260-amino-acid chain; its full sequence is DNA repair protein RecO (260 aa).

The protein belongs to the RecO family.

In terms of biological role, involved in DNA repair and RecF pathway recombination. The chain is DNA repair protein RecO from Streptococcus gordonii (strain Challis / ATCC 35105 / BCRC 15272 / CH1 / DL1 / V288).